Consider the following 174-residue polypeptide: Adenine phosphoribosyltransferase (174 aa).

The protein belongs to the purine/pyrimidine phosphoribosyltransferase family. In terms of assembly, homodimer.

Its subcellular location is the cytoplasm. The enzyme catalyses AMP + diphosphate = 5-phospho-alpha-D-ribose 1-diphosphate + adenine. Its pathway is purine metabolism; AMP biosynthesis via salvage pathway; AMP from adenine: step 1/1. Functionally, catalyzes a salvage reaction resulting in the formation of AMP, that is energically less costly than de novo synthesis. The chain is Adenine phosphoribosyltransferase from Dichelobacter nodosus (strain VCS1703A).